A 38-amino-acid chain; its full sequence is Large ribosomal subunit protein bL36 (38 aa).

Belongs to the bacterial ribosomal protein bL36 family.

This Chlorobium limicola (strain DSM 245 / NBRC 103803 / 6330) protein is Large ribosomal subunit protein bL36.